The primary structure comprises 251 residues: Phosphate import ATP-binding protein PstB 2 (251 aa).

One can recognise an ABC transporter domain in the interval Leu-5 to Ile-246. Gly-37 to Ser-44 lines the ATP pocket.

It belongs to the ABC transporter superfamily. Phosphate importer (TC 3.A.1.7) family. In terms of assembly, the complex is composed of two ATP-binding proteins (PstB), two transmembrane proteins (PstC and PstA) and a solute-binding protein (PstS).

It localises to the cell membrane. It carries out the reaction phosphate(out) + ATP + H2O = ADP + 2 phosphate(in) + H(+). Its function is as follows. Part of the ABC transporter complex PstSACB involved in phosphate import. Responsible for energy coupling to the transport system. In Lactiplantibacillus plantarum (strain ATCC BAA-793 / NCIMB 8826 / WCFS1) (Lactobacillus plantarum), this protein is Phosphate import ATP-binding protein PstB 2.